A 193-amino-acid polypeptide reads, in one-letter code: Xanthine phosphoribosyltransferase (193 aa).

Leucine 20 and threonine 27 together coordinate xanthine. 128 to 132 is a 5-phospho-alpha-D-ribose 1-diphosphate binding site; sequence ANGQA. Lysine 156 serves as a coordination point for xanthine.

This sequence belongs to the purine/pyrimidine phosphoribosyltransferase family. Xpt subfamily. As to quaternary structure, homodimer.

It is found in the cytoplasm. It catalyses the reaction XMP + diphosphate = xanthine + 5-phospho-alpha-D-ribose 1-diphosphate. The protein operates within purine metabolism; XMP biosynthesis via salvage pathway; XMP from xanthine: step 1/1. In terms of biological role, converts the preformed base xanthine, a product of nucleic acid breakdown, to xanthosine 5'-monophosphate (XMP), so it can be reused for RNA or DNA synthesis. This Streptococcus pyogenes serotype M3 (strain ATCC BAA-595 / MGAS315) protein is Xanthine phosphoribosyltransferase.